The following is an 845-amino-acid chain: Protein kintoun (845 aa).

Basic and acidic residues predominate over residues 362 to 382 (SKEQAQMHETLRHFSREDSGV). Disordered regions lie at residues 362 to 420 (SKEQ…PVRH), 575 to 691 (QALK…SMSD), and 773 to 845 (AQHR…EMDD). Position 380 is a phosphoserine (S380). A compositionally biased stretch (acidic residues) spans 391–400 (PVEEDPDGEL). Basic and acidic residues predominate over residues 584 to 593 (GTKEEEKENQ). Basic residues predominate over residues 611–622 (KPGKKQRKRNKK). Residues 640-671 (LTKNSELQPKSTFNLPQRKQRSYSECNDSTGG) are compositionally biased toward polar residues. At S779 the chain carries Phosphoserine. Residues 794 to 804 (LKQQENQSRNC) show a composition bias toward polar residues.

This sequence belongs to the PIH1 family. Kintoun subfamily. As to quaternary structure, interacts with Pp1alpha-96A, Pp1-87B, Pp1-13C and flw.

It is found in the cytoplasm. In terms of biological role, required for cytoplasmic pre-assembly of axonemal dyneins, thereby playing a central role in motility in cilia and flagella. Involved in pre-assembly of dynein arm complexes in the cytoplasm before intraflagellar transport loads them for the ciliary compartment. In Drosophila erecta (Fruit fly), this protein is Protein kintoun.